The following is a 1692-amino-acid chain: MALLNVISENPLTLQPGQVIAFDHLANGEHWQWALGTVVSSDKHVVVVEQWAVNEGSCETLKHNISSEIQKEMKRMGVFQEQLSSARDKLAAIRSENEDRVSAARAVFEDAKARVASVDEVHMREVTSQACPSPVAVEVLKSVLALAQNDPTVTNCSTWDDIRMEYRRPNAIADFISADITGKTYPNAEEICSSLNEQRLSSLAASRDSEAISSLHHWVLSALAYQEAYCRLTTDTRVQEQNDAIANCIAGMKGCRLKVMKLKEELERGGTPTFGGQLTSFTKTSVQLKAPLSSVISIVGVDPSAQDCVLTDDEVGLILDKAEQTRLQINDHFSHLSNSYMEAMAELHCLSMYTSELEERRLNLQERFVFSLFTNAGKTNAPRRERIETDVGLRSVEAPRGDSANNIKDLQEIIKELSSHDERWMYRNEPTVTTKHRKSYPGREWSKVVERKPEELLSTFRTEQAAACHVPEDAIRNIEFTATSEKLQVSFDVQHPVKQTAAEINKRLQEFPSRGMDRMLCDVDQPKKGLDRAIVEVCRAFDLREHAFRGMTFDKFIEEVAMKGRVGDKDAYESEIGDLLMLLDKIHNENRSLQYTLEKSAEEFRRQTASTMREQESLRQRNGELHAEIGRLRDLVEKLRDLADNQASELELLKLQKTQANQIRAQRNLSTFRGDDTAEPVYCVTLDELREQTEHCDQVERELERQREQCQNLLNAQDDLLAELSGVSEEKEKLEAECERLEAELRQMEEKSRLSEQGLSEMTQRLEEKQAEIEGLLENLEQLDEQLEALRAAEKSAQAHIEARDREISDLQQRLEGEIDDHIKTTALLEELRKHYNNLEELFDKQEAELMAYREKRQNAHKVRSLEPTLRPIGTQTKPFQEMVSADEISSEPLLSVTLDEYNDHMHRSNQFQQENDLLRQQLQQANDERENLHDRLEQLMAENQSLSEQLHNMHEELEREERDRSGVTLQNERLAEEIQRKTAENEQLVLENNKSRSDIRNLNVQVQRLMEELELKAAENEKLAEELELKAAENEKLAEELELKVAENEKLAEELELKVAENEKLAEELELKAAENEKLAEELELKAAENEKLAEELELKAAENEKLAEELELKAAENEKLAEELELKAAENEKLAEELELKAAENEKLAEELELKAAENEKLAEELELKVAENEKLAEELELKAAENEKLAEELELKVAENEKLAEELELKAAENEKLAEELELKAAENEKLAEELELKAAENEKLAEELELKAAENEKLAEELELKVAENEKLAEELELKAAENEKLAEELELKVAENEKLAEELELKAAENEKLAEELELKVAENEKLAEELELKAAENEKLAEELELKVAENEKLAEELELKAAENEKLAEELELKAAENEKLAEELELKAAENEKLAEELELKAAENEKLAEELELKAAENEKLAEELELKVAENEKLAEELELKAAENEKLAEELELKVAENEKLAEELELKAAENEKLAEELELKAAENEKLAEELELKAAENEKLAEELELKVAENKRLAEEVTQRLSEKELLAEDTSARLLEADSANSALQCKVKHLEEKLTLLSSEKETALATLEAEIVDLLTQLKGLNGTNSALESLCASKEKELVFLREHCELWTDPTTKKEKVITRHVKVFDGNEWMKLITDRPEALMSAFVIDAGNACHVPGDQIHEVSFLNNKEKH.

3 coiled-coil regions span residues 613–657 (REQE…KLQK), 684–864 (VTLD…HKVR), and 903–1607 (NDHM…SALE). 37 repeat units span residues 1012–1025 (EELE…EKLA), 1026–1039 (EELE…EKLA), 1040–1053 (EELE…EKLA), 1054–1067 (EELE…EKLA), 1068–1081 (EELE…EKLA), 1082–1095 (EELE…EKLA), 1096–1109 (EELE…EKLA), 1110–1123 (EELE…EKLA), 1124–1137 (EELE…EKLA), 1138–1151 (EELE…EKLA), 1152–1165 (EELE…EKLA), 1166–1179 (EELE…EKLA), 1180–1193 (EELE…EKLA), 1194–1207 (EELE…EKLA), 1208–1221 (EELE…EKLA), 1222–1235 (EELE…EKLA), 1236–1249 (EELE…EKLA), 1250–1263 (EELE…EKLA), 1264–1277 (EELE…EKLA), 1278–1291 (EELE…EKLA), 1292–1305 (EELE…EKLA), 1306–1319 (EELE…EKLA), 1320–1333 (EELE…EKLA), 1334–1347 (EELE…EKLA), 1348–1361 (EELE…EKLA), 1362–1375 (EELE…EKLA), 1376–1389 (EELE…EKLA), 1390–1403 (EELE…EKLA), 1404–1417 (EELE…EKLA), 1418–1431 (EELE…EKLA), 1432–1445 (EELE…EKLA), 1446–1459 (EELE…EKLA), 1460–1473 (EELE…EKLA), 1474–1487 (EELE…EKLA), 1488–1501 (EELE…EKLA), 1502–1515 (EELE…EKLA), and 1516–1529 (EELE…KRLA). The segment at 1012-1529 (EELELKAAEN…LKVAENKRLA (518 aa)) is 37 X 14 AA tandem repeats of E-E-L-E-L-K-[VA]-A-E-N-E-K-L-A.

It is found in the cell projection. It localises to the cilium. The protein localises to the flagellum. A component of FAZ filament that is required for correct FAZ assembly and attachment. Not essential for new flagellum growth. The chain is Flagellar attachment zone protein 1 from Trypanosoma brucei brucei (strain 927/4 GUTat10.1).